The following is a 145-amino-acid chain: AP-2 complex subunit sigma (145 aa).

Belongs to the adaptor complexes small subunit family. As to quaternary structure, adaptor protein complex 2 (AP-2) is a heterotetramer composed of two large adaptins (alpha-type subunit apl3 and beta-type subunit apl1), a medium chain (mu-type subunit apm4) and a small adaptin (sigma-type subunit aps2).

The protein resides in the cell membrane. Its subcellular location is the membrane. It is found in the coated pit. In terms of biological role, component of the adaptor complexes which link clathrin to receptors in coated vesicles. Clathrin-associated protein complexes are believed to interact with the cytoplasmic tails of membrane proteins, leading to their selection and concentration. The protein is AP-2 complex subunit sigma (aps2) of Emericella nidulans (strain FGSC A4 / ATCC 38163 / CBS 112.46 / NRRL 194 / M139) (Aspergillus nidulans).